The chain runs to 802 residues: Copal-8-ol diphosphate hydratase, chloroplastic (802 aa).

Residues 1 to 24 constitute a chloroplast transit peptide; sequence MQVIITSSHRFFCHHLHQLKSPTS. Lys-249 contacts substrate. Residues Asp-382 and Asp-384 each contribute to the Mg(2+) site. Residues 382–385 carry the DXDD motif motif; that stretch reads DVDD. Lys-468 is a binding site for substrate.

It belongs to the terpene synthase family. The cofactor is Mg(2+). Expressed specifically in the secretory cells of the glandular trichomes.

Its subcellular location is the plastid. It is found in the chloroplast. The enzyme catalyses (2E,6E,10E)-geranylgeranyl diphosphate + H2O = 8-hydroxycopalyl diphosphate. The protein operates within secondary metabolite biosynthesis; terpenoid biosynthesis. Functionally, class-II terpene synthase that synthesizes 8-hydroxy-copalyl diphosphate. Involved in the biosynthesis of cis-abienol, a labdane diterpene that can be used as synthesis precursor of ambergris substitution fragance products. In Nicotiana tabacum (Common tobacco), this protein is Copal-8-ol diphosphate hydratase, chloroplastic.